Here is a 510-residue protein sequence, read N- to C-terminus: 2,3-bisphosphoglycerate-independent phosphoglycerate mutase (510 aa).

Residues Asp12 and Ser62 each coordinate Mn(2+). The active-site Phosphoserine intermediate is Ser62. Residues His123, Arg153–Asp154, Arg185, Arg191, Arg260–Arg263, and Lys333 contribute to the substrate site. Residues Asp400, His404, Asp441, His442, and His460 each contribute to the Mn(2+) site.

Belongs to the BPG-independent phosphoglycerate mutase family. As to quaternary structure, monomer. The cofactor is Mn(2+).

The enzyme catalyses (2R)-2-phosphoglycerate = (2R)-3-phosphoglycerate. It functions in the pathway carbohydrate degradation; glycolysis; pyruvate from D-glyceraldehyde 3-phosphate: step 3/5. Catalyzes the interconversion of 2-phosphoglycerate and 3-phosphoglycerate. This Clostridium acetobutylicum (strain ATCC 824 / DSM 792 / JCM 1419 / IAM 19013 / LMG 5710 / NBRC 13948 / NRRL B-527 / VKM B-1787 / 2291 / W) protein is 2,3-bisphosphoglycerate-independent phosphoglycerate mutase.